The primary structure comprises 897 residues: Serine/threonine-protein kinase ATG1 (897 aa).

The Protein kinase domain maps to 24-325 (YTAEKEIGKG…FEEFFANKVV (302 aa)). ATP is bound by residues 30–38 (IGKGSFATV) and lysine 54. Serine 34 carries the post-translational modification Phosphoserine. Threonine 129 carries the post-translational modification Phosphothreonine. The Proton acceptor role is filled by aspartate 172. Residue threonine 226 is modified to Phosphothreonine; by autocatalysis. Phosphoserine occurs at positions 304, 365, and 390. An LIR motif is present at residues 429–432 (YVVV). The tract at residues 490-509 (LLRATSSSSGGSDGSRRPSL) is disordered. Serine 508 and serine 515 each carry phosphoserine; by PKA. Residues serine 533, serine 551, and serine 552 each carry the phosphoserine modification. Residue threonine 590 is modified to Phosphothreonine. 9 positions are modified to phosphoserine: serine 621, serine 635, serine 638, serine 647, serine 677, serine 680, serine 683, serine 769, and serine 783. Residues 880–886 (DSIANRL) form a required for Cvt trafficking region.

This sequence belongs to the protein kinase superfamily. Ser/Thr protein kinase family. APG1/unc-51/ULK1 subfamily. Homodimer. Dimerization requires the presence of ATG13. Forms a ternary complex with ATG13 and ATG17. Also interacts with ATG11. Autophosphorylated at Thr-226 and Ser-390. The phosphorylation state may play a role in the induction of protein degradation upon starvation. Phosphorylation at Thr-226 within the activation loop is required for protein kinase activity whereas phosphorylation at Ser-34 leads to inhibition of kinase activity. Phosphorylation of Ser-508 and Ser-515 by PKA is required to induce autophagy but not for kinase activity.

The protein resides in the cytoplasm. Its subcellular location is the preautophagosomal structure membrane. It catalyses the reaction L-seryl-[protein] + ATP = O-phospho-L-seryl-[protein] + ADP + H(+). It carries out the reaction L-threonyl-[protein] + ATP = O-phospho-L-threonyl-[protein] + ADP + H(+). Activated by hypophosphorylated form of ATG13 (present in nitrogen starvation conditions). Also activated by autophopsphorylation of Thr-226 and inhibited by phosphorylation of Ser-34. Its function is as follows. Serine/threonine protein kinase involved in the cytoplasm to vacuole transport (Cvt) and found to be essential in autophagy, where it is required for the formation of autophagosomes. Involved in the clearance of protein aggregates which cannot be efficiently cleared by the proteasome. Required for selective autophagic degradation of the nucleus (nucleophagy) as well as for mitophagy which contributes to regulate mitochondrial quantity and quality by eliminating the mitochondria to a basal level to fulfill cellular energy requirements and preventing excess ROS production. Also involved in endoplasmic reticulum-specific autophagic process, in selective removal of ER-associated degradation (ERAD) substrates. Plays a key role in ATG9 and ATG23 cycling through the pre-autophagosomal structure and is necessary to promote ATG18 binding to ATG9 through phosphorylation of ATG9. Catalyzes phosphorylation of ATG4, decreasing the interaction between ATG4 and ATG8 and impairing deconjugation of PE-conjugated forms of ATG8. Finally, ATG1 is also required for the maintenance of cell viability under starvation and for glycogen storage during stationary phase. Plays a role in genome stability through suppression of abnormal mitosis under starvation, and in regulation of filamentous growth. This is Serine/threonine-protein kinase ATG1 from Saccharomyces cerevisiae (strain YJM789) (Baker's yeast).